Here is a 108-residue protein sequence, read N- to C-terminus: uncharacterized protein (108 aa).

The segment at 75–94 is disordered; the sequence is TPQVSSFPSSTTSLSHSCTT. Residues 79–94 are compositionally biased toward low complexity; that stretch reads SSFPSSTTSLSHSCTT.

This is an uncharacterized protein from Homo sapiens (Human).